Consider the following 374-residue polypeptide: Wnt inhibitory factor 1 (374 aa).

Residues 1–28 (MSLTGYFAAPLCSIFLFILAHADAGQQE) form the signal peptide. The WIF domain occupies 33–172 (MWIDAHQARV…PQNAIFFKTC (140 aa)). A glycan (N-linked (GlcNAc...) asparagine) is linked at asparagine 83. 7 cysteine pairs are disulfide-bonded: cysteine 135–cysteine 172, cysteine 177–cysteine 187, cysteine 181–cysteine 193, cysteine 195–cysteine 204, cysteine 209–cysteine 219, cysteine 213–cysteine 225, and cysteine 227–cysteine 236. EGF-like domains lie at 173–205 (QQAK…PHCE), 208–237 (LCMP…INCD), 237–269 (DKVN…EQCE), 270–301 (TSKC…DLCS), and 302–333 (KPVC…RYCN). An N-linked (GlcNAc...) asparagine glycan is attached at asparagine 240. 9 cysteine pairs are disulfide-bonded: cysteine 241/cysteine 251, cysteine 245/cysteine 257, cysteine 259/cysteine 268, cysteine 273/cysteine 283, cysteine 277/cysteine 289, cysteine 291/cysteine 300, cysteine 305/cysteine 315, cysteine 309/cysteine 321, and cysteine 323/cysteine 332. Residues 343 to 374 (ALRPTGSRNRQHTPSPKRTEDRQALPESNYIW) are disordered. Over residues 348–358 (GSRNRQHTPSP) the composition is skewed to polar residues.

In terms of tissue distribution, during somatogenesis, expressed predominantly in unsegmented paraxial presomitic mesoderm and, to a much lesser extent, in newly segmented somites.

It is found in the secreted. Functionally, binds to WNT proteins and inhibits their activities. May be involved in mesoderm segmentation. In Xenopus laevis (African clawed frog), this protein is Wnt inhibitory factor 1 (wif1).